A 353-amino-acid polypeptide reads, in one-letter code: Adenine deaminase (353 aa).

His-19, His-21, and His-208 together coordinate Zn(2+). Glu-211 (proton donor) is an active-site residue. Asp-289 contributes to the Zn(2+) binding site. Asp-290 serves as a coordination point for substrate.

The protein belongs to the metallo-dependent hydrolases superfamily. Adenosine and AMP deaminases family. Adenine deaminase type 2 subfamily. It depends on Zn(2+) as a cofactor.

It localises to the cytoplasm. The protein resides in the nucleus. The enzyme catalyses adenine + H2O + H(+) = hypoxanthine + NH4(+). In terms of biological role, catalyzes the hydrolytic deamination of adenine to hypoxanthine. Plays an important role in the purine salvage pathway and in nitrogen catabolism. This Gibberella zeae (strain ATCC MYA-4620 / CBS 123657 / FGSC 9075 / NRRL 31084 / PH-1) (Wheat head blight fungus) protein is Adenine deaminase.